A 237-amino-acid polypeptide reads, in one-letter code: tRNA (guanine-N(7)-)-methyltransferase (237 aa).

The S-adenosyl-L-methionine site is built by E67, E92, D119, and D141. D141 is an active-site residue. Residues K145, D177, and 214–217 (TRYE) each bind substrate.

The protein belongs to the class I-like SAM-binding methyltransferase superfamily. TrmB family.

It carries out the reaction guanosine(46) in tRNA + S-adenosyl-L-methionine = N(7)-methylguanosine(46) in tRNA + S-adenosyl-L-homocysteine. It functions in the pathway tRNA modification; N(7)-methylguanine-tRNA biosynthesis. Functionally, catalyzes the formation of N(7)-methylguanine at position 46 (m7G46) in tRNA. The chain is tRNA (guanine-N(7)-)-methyltransferase from Ruegeria pomeroyi (strain ATCC 700808 / DSM 15171 / DSS-3) (Silicibacter pomeroyi).